A 302-amino-acid polypeptide reads, in one-letter code: Nucleotide-binding protein Bcep1808_2900 (302 aa).

8-15 (GISGSGKS) serves as a coordination point for ATP. Residue 57 to 60 (DARS) participates in GTP binding.

Belongs to the RapZ-like family.

In terms of biological role, displays ATPase and GTPase activities. The chain is Nucleotide-binding protein Bcep1808_2900 from Burkholderia vietnamiensis (strain G4 / LMG 22486) (Burkholderia cepacia (strain R1808)).